The chain runs to 420 residues: Glucose-1-phosphate adenylyltransferase (420 aa).

Residues Tyr-107, Gly-172, 187–188 (EK), and Ser-205 contribute to the alpha-D-glucose 1-phosphate site.

This sequence belongs to the bacterial/plant glucose-1-phosphate adenylyltransferase family. Homotetramer.

It carries out the reaction alpha-D-glucose 1-phosphate + ATP + H(+) = ADP-alpha-D-glucose + diphosphate. The protein operates within glycan biosynthesis; glycogen biosynthesis. Functionally, involved in the biosynthesis of ADP-glucose, a building block required for the elongation reactions to produce glycogen. Catalyzes the reaction between ATP and alpha-D-glucose 1-phosphate (G1P) to produce pyrophosphate and ADP-Glc. The polypeptide is Glucose-1-phosphate adenylyltransferase (Rhodopseudomonas palustris (strain TIE-1)).